A 304-amino-acid polypeptide reads, in one-letter code: Ribosome-inactivating protein 9 (304 aa).

The active site involves Glu-208.

It belongs to the ribosome-inactivating protein family. Type 1 RIP subfamily. Monomer. In terms of tissue distribution, accumulates to high levels in seeds.

The protein localises to the cytoplasm. The enzyme catalyses Endohydrolysis of the N-glycosidic bond at one specific adenosine on the 28S rRNA.. Its function is as follows. Possesses features of some constitutive defense agent. The coordinate Opaque-2-controlled synthesis of this protein and the major seed storage proteins (zeins) may provide the germinating seedling with both nutritional benefits and protection against pathogen invasion of the surrounding endosperm. The sequence is that of Ribosome-inactivating protein 9 (CRIP9) from Zea mays (Maize).